We begin with the raw amino-acid sequence, 194 residues long: Acid tolerance regulatory protein ActR (194 aa).

The region spanning 24 to 138 (SLLIVDDDTA…DILAALIQRP (115 aa)) is the Response regulatory domain. D73 is subject to 4-aspartylphosphate.

Post-translationally, phosphorylated by ActS.

In terms of biological role, member of the two-component regulatory system ActS/ActR acting in acid tolerance. These data implicate that a two-component sensor may be involved in pH sensing and/or response. This is Acid tolerance regulatory protein ActR (actR) from Rhizobium meliloti (strain 1021) (Ensifer meliloti).